We begin with the raw amino-acid sequence, 467 residues long: MEKKPLTPRQIVDRLDQYIVGQQNAKKAVAVALRNRYRRSLLDEKLKDEVVPKNILMMGPTGVGKTEIARRIAKLSGAPFIKIEATKFTEVGYVGRDVESMVRDLVETSVRLIKEEKMNEVKEQAEENANKRIVRLLVPGKKKQSGVKNPFEMFFGGSQPNGEDEAESQEEANIEEKRKRMAHQLALGELEDYYVTVEVEEQQPSMFDMLQGSGMEQMGMNMQDALSGLMPKKKKRRKMTVREARKVLTNEEASKLIDMDEVGQEAVQRAEESGIIFIDEIDKIAKNGGASSSADVSREGVQRDILPIVEGSTVVTKYGSVKTDHVLFIAAGAFHMAKPSDLIPELQGRFPIRVELNKLTVDDFVRILVEPDNALLKQYQALLQTEGISLEFSDEAIHKIAEVAYHVNQDTDNIGARRLHTILERLLEDLSFEAPDVTMEKITITPQYVEEKLGTIAKNKDLSQFIL.

ATP contacts are provided by residues Val20, 62–67, Asp279, Glu345, and Arg417; that span reads GVGKTE.

Belongs to the ClpX chaperone family. HslU subfamily. In terms of assembly, a double ring-shaped homohexamer of ClpQ is capped on each side by a ring-shaped ClpY homohexamer. The assembly of the ClpQ/ClpY complex is dependent on binding of ATP.

It localises to the cytoplasm. Its activity is regulated as follows. ATPase activity is much induced upon complex formation with ClpQ. Its function is as follows. ATPase subunit of a proteasome-like degradation complex; this subunit has chaperone activity. The chain is ATP-dependent protease ATPase subunit ClpY (clpY) from Bacillus subtilis (strain 168).